A 308-amino-acid chain; its full sequence is uncharacterized protein (308 aa).

The next 10 helical transmembrane spans lie at 6–26, 31–51, 63–83, 100–120, 128–148, 162–182, 195–215, 221–241, 257–277, and 287–307; these read VVLI…FGIL, AKIL…FLTI, FLKL…LAYL, ILVS…LGMF, AIFC…YVGI, MAKF…FFGF, LNYL…LSLS, FGVF…PATA, VLLV…GTLY, and SIFI…WILL.

It belongs to the auxin efflux carrier (TC 2.A.69) family.

It is found in the cell membrane. This is an uncharacterized protein from Methanocaldococcus jannaschii (strain ATCC 43067 / DSM 2661 / JAL-1 / JCM 10045 / NBRC 100440) (Methanococcus jannaschii).